The primary structure comprises 207 residues: MSYQENNAMPSIMDALVPMVVEQTSRGERSYDIYSRLLKERVIFLTGQVEDHMANLVVAQLLFLESENPDKDIFLYINSPGGSVTAGMSIYDTMQFIKPNVSTVCMGQACSMGAFLLAGGAPGKRYVLPNSRVMIHQPLGGFQGQASDIQIHAQEILTIKKKLNTLLAEHTGQPLEVIEKDTDRDNFMAADDAVKYGLVDAVLNKRD.

S111 acts as the Nucleophile in catalysis. H136 is a catalytic residue.

The protein belongs to the peptidase S14 family. In terms of assembly, fourteen ClpP subunits assemble into 2 heptameric rings which stack back to back to give a disk-like structure with a central cavity, resembling the structure of eukaryotic proteasomes.

The protein resides in the cytoplasm. It catalyses the reaction Hydrolysis of proteins to small peptides in the presence of ATP and magnesium. alpha-casein is the usual test substrate. In the absence of ATP, only oligopeptides shorter than five residues are hydrolyzed (such as succinyl-Leu-Tyr-|-NHMec, and Leu-Tyr-Leu-|-Tyr-Trp, in which cleavage of the -Tyr-|-Leu- and -Tyr-|-Trp bonds also occurs).. Functionally, cleaves peptides in various proteins in a process that requires ATP hydrolysis. Has a chymotrypsin-like activity. Plays a major role in the degradation of misfolded proteins. In Aliivibrio salmonicida (strain LFI1238) (Vibrio salmonicida (strain LFI1238)), this protein is ATP-dependent Clp protease proteolytic subunit.